The sequence spans 607 residues: Discoidin-inducing complex subunit B (607 aa).

The signal sequence occupies residues M1–G19. The Extracellular portion of the chain corresponds to Q20–S554. 10 N-linked (GlcNAc...) asparagine glycosylation sites follow: N75, N161, N215, N276, N277, N307, N324, N453, N477, and N527. A helical membrane pass occupies residues L555–W575. Topologically, residues K576–L607 are cytoplasmic.

Forms a complex with psiF/dicA.

The protein localises to the membrane. The protein resides in the secreted. Its function is as follows. Component of a complex that acts as a quorum sensing protein regulating discoidin gene expression during growth and development. Its function in the complex is unclear as it has no ability to induce discoidin during growth and development by itself. In Dictyostelium discoideum (Social amoeba), this protein is Discoidin-inducing complex subunit B (dicB).